Here is a 69-residue protein sequence, read N- to C-terminus: MKASELRNKTVEELNNELIELRRAQFSLRMQLATQQLNKVDQVGKVRRDIARVRSVLAEKAKAANASQA.

The protein belongs to the universal ribosomal protein uL29 family.

The protein is Large ribosomal subunit protein uL29 of Methylobacillus flagellatus (strain ATCC 51484 / DSM 6875 / VKM B-1610 / KT).